The following is a 355-amino-acid chain: MKSGRGDESPLAAGGPARHVPVLREEVVAALDCKKGGFYLDATFGAGGYTRALLAEPETHVLAIDRDPEAIAAGRALEAESAGRLILAHGRFSTLADIAAAEGIPAFDGIVFDIGVSSMQLDQPERGFSFRGEGPLDMRMESRGPSAADLVNTADEQRLADIFYYFGEERASRRIARAIVTDRAHTPFTTTRQLAELIARVNPGKPGDIHPATRVFQALRIAVNEELLELVRALAAAEALLREGGRLVVVTFHSLEDRIVKQFLAARSGRGQAVSRPLPGEPALAPPTFILPGKQPVLPSPEEIAVNPRARSAKLRFGLRTAAPARGLESGLLPLATLPETSHPKSASHSKSRRR.

S-adenosyl-L-methionine-binding positions include Gly47–Tyr49, Asp65, Phe92, Asp113, and Gln120. A disordered region spans residues Leu332–Arg355. Positions Ser346 to Arg355 are enriched in basic residues.

Belongs to the methyltransferase superfamily. RsmH family.

The protein localises to the cytoplasm. It catalyses the reaction cytidine(1402) in 16S rRNA + S-adenosyl-L-methionine = N(4)-methylcytidine(1402) in 16S rRNA + S-adenosyl-L-homocysteine + H(+). Specifically methylates the N4 position of cytidine in position 1402 (C1402) of 16S rRNA. In Beijerinckia indica subsp. indica (strain ATCC 9039 / DSM 1715 / NCIMB 8712), this protein is Ribosomal RNA small subunit methyltransferase H.